A 303-amino-acid chain; its full sequence is Probable 5-dehydro-4-deoxyglucarate dehydratase (303 aa).

The protein belongs to the DapA family.

The catalysed reaction is 5-dehydro-4-deoxy-D-glucarate + H(+) = 2,5-dioxopentanoate + CO2 + H2O. It participates in carbohydrate acid metabolism; D-glucarate degradation; 2,5-dioxopentanoate from D-glucarate: step 2/2. This Delftia acidovorans (strain DSM 14801 / SPH-1) protein is Probable 5-dehydro-4-deoxyglucarate dehydratase.